Consider the following 367-residue polypeptide: Glutamate 5-kinase (367 aa).

Residue lysine 9 participates in ATP binding. Residues serine 49, aspartate 136, and asparagine 148 each contribute to the substrate site. ATP is bound by residues 168–169 (TD) and 210–216 (TGGMKSK). One can recognise a PUA domain in the interval 276–350 (SGQIEVDAGA…GMQSQDIQAR (75 aa)).

It belongs to the glutamate 5-kinase family.

Its subcellular location is the cytoplasm. It carries out the reaction L-glutamate + ATP = L-glutamyl 5-phosphate + ADP. The protein operates within amino-acid biosynthesis; L-proline biosynthesis; L-glutamate 5-semialdehyde from L-glutamate: step 1/2. Its function is as follows. Catalyzes the transfer of a phosphate group to glutamate to form L-glutamate 5-phosphate. The chain is Glutamate 5-kinase from Bacillus mycoides (strain KBAB4) (Bacillus weihenstephanensis).